The sequence spans 487 residues: Complement C1r subcomponent-like protein (487 aa).

The N-terminal stretch at M1–A35 is a signal peptide. One can recognise a CUB domain in the interval R39–V163. Residues C94 and C112 are joined by a disulfide bond. N147 and N166 each carry an N-linked (GlcNAc...) asparagine glycan. In terms of domain architecture, Sushi spans V165–P230. C195 and C228 form a disulfide bridge. N242 carries N-linked (GlcNAc...) (complex) asparagine glycosylation. Residues T245–N484 enclose the Peptidase S1 domain. H283 functions as the Charge relay system in the catalytic mechanism. Residue N296 is glycosylated (N-linked (GlcNAc...) asparagine). D339 functions as the Charge relay system in the catalytic mechanism. Residue N363 is glycosylated (N-linked (GlcNAc...) asparagine). 2 disulfide bridges follow: C402–C421 and C432–C462. The Charge relay system role is filled by S436.

It belongs to the peptidase S1 family. As to expression, highly expressed in placenta, liver, kidney, pancreas, moderately in lung, spleen, prostate, ovary, colon, and PBL, and weakly in heart, skeletal muscle, thymus, testis, and small intestine. Expressed in PC-3 (prostate adenocarcinoma) and SK-OV-3 (ovary adenocarcinoma) cells, but not in LoVo and HT-29 (colon adenocarcinoma), SMMC7721 (hepatocellular carcinoma), CaoV-3 (ovary adenocarcinoma), HeLa (cervix epithelioid carcinoma), MCF-7 (breast adenocarcinoma), U-251MG (glioma) or A-549 (lung carcinoma) cells. Widely expressed in myeloid leukemia cell lines, including K-562 (chronic myelogenous leukemia), THP-1 (myelomonocytic leukemia), HL-60 and NB4 (promyelocytic leukemia), and KG-1 (acute myelogenous leukemia) cells. Expressed mainly in the liver and in serum (at protein level).

The protein resides in the secreted. Mediates the proteolytic cleavage of HP/haptoglobin in the endoplasmic reticulum. The chain is Complement C1r subcomponent-like protein (C1RL) from Homo sapiens (Human).